Reading from the N-terminus, the 428-residue chain is Peptidase B (428 aa).

Residues lysine 195 and aspartate 200 each contribute to the Mn(2+) site. Lysine 207 is an active-site residue. Mn(2+) contacts are provided by aspartate 218, aspartate 277, and glutamate 279. The active site involves arginine 281.

This sequence belongs to the peptidase M17 family. As to quaternary structure, homohexamer. The cofactor is Mn(2+).

It localises to the cytoplasm. The catalysed reaction is Release of an N-terminal amino acid, Xaa, from a peptide or arylamide. Xaa is preferably Glu or Asp but may be other amino acids, including Leu, Met, His, Cys and Gln.. Probably plays an important role in intracellular peptide degradation. This chain is Peptidase B, found in Enterobacter sp. (strain 638).